Reading from the N-terminus, the 310-residue chain is Elongation factor Ts (310 aa).

Positions 80-83 are involved in Mg(2+) ion dislocation from EF-Tu; the sequence is TDFV.

It belongs to the EF-Ts family.

The protein localises to the cytoplasm. Functionally, associates with the EF-Tu.GDP complex and induces the exchange of GDP to GTP. It remains bound to the aminoacyl-tRNA.EF-Tu.GTP complex up to the GTP hydrolysis stage on the ribosome. The protein is Elongation factor Ts of Methylocella silvestris (strain DSM 15510 / CIP 108128 / LMG 27833 / NCIMB 13906 / BL2).